We begin with the raw amino-acid sequence, 59 residues long: Large ribosomal subunit protein uL30 (59 aa).

Belongs to the universal ribosomal protein uL30 family. In terms of assembly, part of the 50S ribosomal subunit.

This Actinobacillus pleuropneumoniae serotype 7 (strain AP76) protein is Large ribosomal subunit protein uL30.